The following is a 243-amino-acid chain: Triosephosphate isomerase (243 aa).

9–11 (NWK) contacts substrate. The Electrophile role is filled by His96. Catalysis depends on Glu165, which acts as the Proton acceptor. Substrate is bound by residues Gly171, Ser204, and 225 to 226 (GG).

It belongs to the triosephosphate isomerase family. Homodimer.

The protein localises to the cytoplasm. The catalysed reaction is D-glyceraldehyde 3-phosphate = dihydroxyacetone phosphate. It participates in carbohydrate biosynthesis; gluconeogenesis. The protein operates within carbohydrate degradation; glycolysis; D-glyceraldehyde 3-phosphate from glycerone phosphate: step 1/1. Functionally, involved in the gluconeogenesis. Catalyzes stereospecifically the conversion of dihydroxyacetone phosphate (DHAP) to D-glyceraldehyde-3-phosphate (G3P). The protein is Triosephosphate isomerase of Prochlorococcus marinus (strain MIT 9211).